We begin with the raw amino-acid sequence, 466 residues long: Muscarinic acetylcholine receptor M2 (466 aa).

The Extracellular segment spans residues Met-1–Glu-22. Residues Asn-2, Asn-3, and Asn-6 are each glycosylated (N-linked (GlcNAc...) asparagine). A helical transmembrane segment spans residues Val-23–Met-45. The Cytoplasmic segment spans residues Val-46–Asn-59. The helical transmembrane segment at Tyr-60 to Tyr-80 threads the bilayer. Over Thr-81–Asp-97 the chain is Extracellular. A disulfide bridge connects residues Cys-96 and Cys-176. A helical membrane pass occupies residues Leu-98–Phe-119. The short motif at Asp-120–Tyr-122 is the Important for signaling element. The Cytoplasmic segment spans residues Asp-120 to Met-139. The helical transmembrane segment at Ala-140 to Trp-162 threads the bilayer. The Extracellular segment spans residues Gln-163–Ala-184. The helical transmembrane segment at Ala-185–Ile-209 threads the bilayer. Topologically, residues Ser-210–Arg-387 are cytoplasmic. Positions Lys-218–Ser-320 are disordered. Position 232 is a phosphoserine (Ser-232). Over residues Gly-254–Gly-270 the composition is skewed to basic and acidic residues. Composition is skewed to polar residues over residues Asn-284–Ala-293 and Asp-304–Gly-313. The chain crosses the membrane as a helical span at residues Thr-388 to Asn-410. Residues Thr-411–Pro-418 lie on the Extracellular side of the membrane. Cys-413 and Cys-416 are oxidised to a cystine. Residues Asn-419–Leu-442 traverse the membrane as a helical segment. The Important for signaling motif lies at Asn-436–Tyr-440. Residues Cys-443–Arg-466 are Cytoplasmic-facing. Phosphothreonine is present on residues Thr-446, Thr-450, and Thr-465.

The protein belongs to the G-protein coupled receptor 1 family. Muscarinic acetylcholine receptor subfamily. CHRM2 sub-subfamily. As to quaternary structure, interacts with ARRB1 and ARRB2. Interacts with RACK1; the interaction regulates CHRM2 internalization. In terms of processing, phosphorylated in response to agonist treatment.

The protein localises to the cell membrane. The protein resides in the postsynaptic cell membrane. Its function is as follows. The muscarinic acetylcholine receptor mediates various cellular responses, including inhibition of adenylate cyclase, breakdown of phosphoinositides and modulation of potassium channels through the action of G proteins. Primary transducing effect is adenylate cyclase inhibition. Signaling promotes phospholipase C activity, leading to the release of inositol trisphosphate (IP3); this then triggers calcium ion release into the cytosol. The polypeptide is Muscarinic acetylcholine receptor M2 (Chrm2) (Mus musculus (Mouse)).